Consider the following 530-residue polypeptide: Hyalin (530 aa).

HYR domains follow at residues 1–66 (NVEI…TVTA), 67–150 (TDSI…NVVE), 151–234 (VDTT…NVVE), 235–319 (VDTT…NVVE), 320–403 (VDTT…NIVE), 404–486 (EDTT…TVNT), and 487–530 (VDTT…ASLV).

In terms of assembly, homooligomer in presence of calcium. In terms of processing, glycosylated.

The protein resides in the secreted. Its subcellular location is the extracellular space. It localises to the extracellular matrix. Functionally, major constituent of the hyaline layer. The hyaline layer of echinoderm embryos is an extraembryonic matrix that functions as a substrate for cell adhesion through early development. This is Hyalin from Lytechinus variegatus (Green sea urchin).